Here is a 124-residue protein sequence, read N- to C-terminus: Small ribosomal subunit protein uS12 (124 aa).

The segment at 1–42 is disordered; that stretch reads MPTIQQLVRKGRRPKVNKTKSPALRGNPQQRGVCSRVYTTTP. The span at 9 to 18 shows a compositional bias: basic residues; it reads RKGRRPKVNK. The segment covering 27 to 42 has biased composition (polar residues); sequence NPQQRGVCSRVYTTTP. The residue at position 89 (Asp89) is a 3-methylthioaspartic acid.

Belongs to the universal ribosomal protein uS12 family. In terms of assembly, part of the 30S ribosomal subunit. Contacts proteins S8 and S17. May interact with IF1 in the 30S initiation complex.

In terms of biological role, with S4 and S5 plays an important role in translational accuracy. Interacts with and stabilizes bases of the 16S rRNA that are involved in tRNA selection in the A site and with the mRNA backbone. Located at the interface of the 30S and 50S subunits, it traverses the body of the 30S subunit contacting proteins on the other side and probably holding the rRNA structure together. The combined cluster of proteins S8, S12 and S17 appears to hold together the shoulder and platform of the 30S subunit. This chain is Small ribosomal subunit protein uS12, found in Tropheryma whipplei (strain TW08/27) (Whipple's bacillus).